A 129-amino-acid polypeptide reads, in one-letter code: Histone H2A-III (129 aa).

Positions 1-22 are disordered; that stretch reads MSGRGKQGGKARAKAKSRSSRA. Position 2 is an N-acetylserine (Ser2). Ser2 carries the post-translational modification Phosphoserine. Lys6 is modified (N6-(2-hydroxyisobutyryl)lysine). N6-acetyllysine is present on residues Lys6 and Lys10. Residues 7-19 show a composition bias toward basic residues; sequence QGGKARAKAKSRS. Lys10 carries the post-translational modification N6-(2-hydroxyisobutyryl)lysine; alternate. An N6-lactoyllysine; alternate modification is found at Lys10. Lys10 is modified (N6-succinyllysine). Residues Lys14 and Lys16 each participate in a glycyl lysine isopeptide (Lys-Gly) (interchain with G-Cter in ubiquitin) cross-link. Lys37 bears the N6-(2-hydroxyisobutyryl)lysine; alternate mark. 2 positions are modified to N6-(2-hydroxyisobutyryl)lysine: Lys75 and Lys76. At Lys96 the chain carries N6-(2-hydroxyisobutyryl)lysine; alternate. Lys96 carries the N6-succinyllysine modification. Lys96 is subject to N6-glutaryllysine; alternate. Lys100 bears the N6-glutaryllysine mark. Gln105 bears the N5-methylglutamine mark. Lys119 is modified (N6-(2-hydroxyisobutyryl)lysine; alternate). Lys119 and Lys120 each carry N6-glutaryllysine; alternate. A Glycyl lysine isopeptide (Lys-Gly) (interchain with G-Cter in ubiquitin) cross-link involves residue Lys120.

This sequence belongs to the histone H2A family. The nucleosome is a histone octamer containing two molecules each of H2A, H2B, H3 and H4 assembled in one H3-H4 heterotetramer and two H2A-H2B heterodimers. The octamer wraps approximately 147 bp of DNA. In terms of processing, monoubiquitination of Lys-120 (H2AK119Ub) gives a specific tag for epigenetic transcriptional repression. Following DNA double-strand breaks (DSBs), it is ubiquitinated through 'Lys-63' linkage of ubiquitin moieties, leading to the recruitment of repair proteins to sites of DNA damage. H2AK119Ub and ionizing radiation-induced 'Lys-63'-linked ubiquitination are distinct events. Post-translationally, phosphorylation on Ser-2 is enhanced during mitosis. Phosphorylation on Ser-2 directly represses transcription. Glutamine methylation at Gln-105 (H2AQ104me) by FBL is specifically dedicated to polymerase I. It is present at 35S ribosomal DNA locus and impairs binding of the FACT complex.

The protein resides in the nucleus. It localises to the chromosome. In terms of biological role, core component of nucleosome. Nucleosomes wrap and compact DNA into chromatin, limiting DNA accessibility to the cellular machineries which require DNA as a template. Histones thereby play a central role in transcription regulation, DNA repair, DNA replication and chromosomal stability. DNA accessibility is regulated via a complex set of post-translational modifications of histones, also called histone code, and nucleosome remodeling. In Gallus gallus (Chicken), this protein is Histone H2A-III.